Reading from the N-terminus, the 404-residue chain is Multidrug resistance protein MdtG (404 aa).

Helical transmembrane passes span 19–39, 56–76, 90–110, 113–133, 144–164, 171–191, 222–242, 254–274, 288–308, 317–337, and 376–396; these read LGCF…PLYV, LVFS…GGLA, LGMA…QFLI, ALLG…ATQV, TLST…GLLA, PVFF…FFFI, LFVT…ILTL, IAFI…LSAP, ILIV…FVQT, FLLG…LVYN, and AVFC…WNSL.

This sequence belongs to the major facilitator superfamily. DHA1 family. MdtG (TC 2.A.1.2.20) subfamily.

It localises to the cell inner membrane. This Salmonella arizonae (strain ATCC BAA-731 / CDC346-86 / RSK2980) protein is Multidrug resistance protein MdtG.